The chain runs to 280 residues: Putative pyruvate, phosphate dikinase regulatory protein (280 aa).

149-156 lines the ADP pocket; sequence GVSRSSKT.

The protein belongs to the pyruvate, phosphate/water dikinase regulatory protein family. PDRP subfamily.

The catalysed reaction is N(tele)-phospho-L-histidyl/L-threonyl-[pyruvate, phosphate dikinase] + ADP = N(tele)-phospho-L-histidyl/O-phospho-L-threonyl-[pyruvate, phosphate dikinase] + AMP + H(+). The enzyme catalyses N(tele)-phospho-L-histidyl/O-phospho-L-threonyl-[pyruvate, phosphate dikinase] + phosphate + H(+) = N(tele)-phospho-L-histidyl/L-threonyl-[pyruvate, phosphate dikinase] + diphosphate. Bifunctional serine/threonine kinase and phosphorylase involved in the regulation of the pyruvate, phosphate dikinase (PPDK) by catalyzing its phosphorylation/dephosphorylation. The polypeptide is Putative pyruvate, phosphate dikinase regulatory protein (Novosphingobium aromaticivorans (strain ATCC 700278 / DSM 12444 / CCUG 56034 / CIP 105152 / NBRC 16084 / F199)).